Here is a 477-residue protein sequence, read N- to C-terminus: Proton-coupled amino acid transporter 3 (477 aa).

The Cytoplasmic segment spans residues 1 to 54; that stretch reads MGNVPLLREVGKCQRNMFGRSTASSKGSSNSRSSSSTSPKKGPRREADALMFIQ. Residues 19-40 show a composition bias toward low complexity; sequence GRSTASSKGSSNSRSSSSTSPK. A disordered region spans residues 19–43; that stretch reads GRSTASSKGSSNSRSSSSTSPKKGP. The chain crosses the membrane as a helical span at residues 55-75; it reads IFIHLLKSNIGTGFLGLPLAV. Residues 76 to 77 lie on the Extracellular side of the membrane; it reads KN. Residues 78 to 98 traverse the membrane as a helical segment; it reads AGLLVGPVSLLAIGALTVHCM. The Cytoplasmic segment spans residues 99 to 144; the sequence is DILLNCACHLTQRLQRSFVNYEETTMYSLETCPSPWLRTHSVWGRY. A helical transmembrane segment spans residues 145-165; the sequence is VVSFLLIVTQLGFCSVYFMFL. The Extracellular portion of the chain corresponds to 166 to 202; sequence ADNLQQIMEEAHFTSNVCQPRQSLVMTSILDTRFYML. The chain crosses the membrane as a helical span at residues 203–223; that stretch reads TILPFLILLVLIQNPQVLSIF. Residues 224–225 lie on the Cytoplasmic side of the membrane; the sequence is ST. The helical transmembrane segment at 226–246 threads the bilayer; it reads LATITTLSSLALIFEYLIQTP. Over 247-259 the chain is Extracellular; it reads HHSNLPLVANWKT. A helical transmembrane segment spans residues 260 to 280; that stretch reads FLLFFGTAIFTFEGVGMVLPL. The Cytoplasmic segment spans residues 281–291; it reads KSQMKSPQQFP. The chain crosses the membrane as a helical span at residues 292 to 312; sequence AVLYLGMSFVIFLYICLGTLG. Residues 313–344 lie on the Extracellular side of the membrane; it reads YMKFGTDTQASITLNLPICWLYQSVKLMYSVG. Residues 345-365 traverse the membrane as a helical segment; that stretch reads IFFTYALQFHVPAEIIVPYVV. Residues 366 to 374 are Cytoplasmic-facing; sequence SRVSENWAL. Residues 375-395 traverse the membrane as a helical segment; the sequence is FVDLTVRTALVCLTCFSAVLI. The Extracellular segment spans residues 396–399; sequence PRLD. Residues 400–420 form a helical membrane-spanning segment; the sequence is LVISLVGSVSSSALAIIIPPL. At 421 to 432 the chain is on the cytoplasmic side; the sequence is LEIATFYSENIS. Residues 433–453 traverse the membrane as a helical segment; sequence CATIVKDIMISILGLLGCVLG. Topologically, residues 454–477 are extracellular; sequence TYQALYEMTQQTHFYMANSTRVHI.

This sequence belongs to the amino acid/polyamine transporter 2 family. As to expression, specifically expressed in testis.

It is found in the membrane. The protein is Proton-coupled amino acid transporter 3 (Slc36a3) of Mus musculus (Mouse).